We begin with the raw amino-acid sequence, 243 residues long: Leucyl/phenylalanyl-tRNA--protein transferase (243 aa).

The disordered stretch occupies residues 1-22 (MHSQPYLLSPTPNTPFPPAEHA).

It belongs to the L/F-transferase family.

The protein resides in the cytoplasm. It carries out the reaction N-terminal L-lysyl-[protein] + L-leucyl-tRNA(Leu) = N-terminal L-leucyl-L-lysyl-[protein] + tRNA(Leu) + H(+). The enzyme catalyses N-terminal L-arginyl-[protein] + L-leucyl-tRNA(Leu) = N-terminal L-leucyl-L-arginyl-[protein] + tRNA(Leu) + H(+). The catalysed reaction is L-phenylalanyl-tRNA(Phe) + an N-terminal L-alpha-aminoacyl-[protein] = an N-terminal L-phenylalanyl-L-alpha-aminoacyl-[protein] + tRNA(Phe). Functions in the N-end rule pathway of protein degradation where it conjugates Leu, Phe and, less efficiently, Met from aminoacyl-tRNAs to the N-termini of proteins containing an N-terminal arginine or lysine. The sequence is that of Leucyl/phenylalanyl-tRNA--protein transferase from Xylella fastidiosa (strain M23).